Here is a 218-residue protein sequence, read N- to C-terminus: Elongation factor Ts (218 aa).

The segment at 82–85 (TDFV) is involved in Mg(2+) ion dislocation from EF-Tu.

Belongs to the EF-Ts family.

It localises to the cytoplasm. Associates with the EF-Tu.GDP complex and induces the exchange of GDP to GTP. It remains bound to the aminoacyl-tRNA.EF-Tu.GTP complex up to the GTP hydrolysis stage on the ribosome. This is Elongation factor Ts from Prochlorococcus marinus (strain MIT 9303).